The following is a 264-amino-acid chain: Undecaprenyl-diphosphatase (264 aa).

8 helical membrane passes run 7-27, 41-61, 89-109, 114-134, 144-164, 186-206, 219-239, and 244-264; these read IVLALIQGLSEFLPISSSAHL, LIFDVVVHMGTLSAVIFYYQA, VLLGTIPIGLVGMIFKDFVAV, IEIIAYTTLVFGLLLGFASWF, TISWIDVSFVSMMQILALIPG, IQFSFLLSIPVITLSLILMLI, LLVLGFVISTISAYATIIFVI, and MVGMTPFVIYRLILGVFLFFL.

It belongs to the UppP family.

The protein localises to the cell inner membrane. The enzyme catalyses di-trans,octa-cis-undecaprenyl diphosphate + H2O = di-trans,octa-cis-undecaprenyl phosphate + phosphate + H(+). Its function is as follows. Catalyzes the dephosphorylation of undecaprenyl diphosphate (UPP). Confers resistance to bacitracin. This Vesicomyosocius okutanii subsp. Calyptogena okutanii (strain HA) protein is Undecaprenyl-diphosphatase.